A 236-amino-acid polypeptide reads, in one-letter code: Uridylate kinase (236 aa).

Residue 10–13 (KLSG) participates in ATP binding. Position 52 (glycine 52) interacts with UMP. Residues glycine 53 and arginine 57 each contribute to the ATP site. Residues aspartate 72 and 133–140 (TGNPFFTT) each bind UMP. Residues threonine 160, tyrosine 166, and aspartate 169 each coordinate ATP.

Belongs to the UMP kinase family. In terms of assembly, homohexamer.

It localises to the cytoplasm. The enzyme catalyses UMP + ATP = UDP + ADP. It functions in the pathway pyrimidine metabolism; CTP biosynthesis via de novo pathway; UDP from UMP (UMPK route): step 1/1. With respect to regulation, inhibited by UTP. Functionally, catalyzes the reversible phosphorylation of UMP to UDP. This chain is Uridylate kinase, found in Bacteroides thetaiotaomicron (strain ATCC 29148 / DSM 2079 / JCM 5827 / CCUG 10774 / NCTC 10582 / VPI-5482 / E50).